Here is a 373-residue protein sequence, read N- to C-terminus: Arabinonate dehydratase (373 aa).

Residues aspartate 199, glutamate 225, and glutamate 251 each coordinate Mg(2+).

The protein belongs to the mandelate racemase/muconate lactonizing enzyme family. As to quaternary structure, homooctamer. Mg(2+) serves as cofactor.

The enzyme catalyses D-arabinonate = 2-dehydro-3-deoxy-D-arabinonate + H2O. Its activity is regulated as follows. Inhibited by substrate levels above 8 mM. Catalyzes the dehydration of D-arabinonate to 2-keto-3-deoxy-D-arabinonate. Participates in a pentose oxidation pathway that converts D-arabinonate to 2-oxoglutarate. The chain is Arabinonate dehydratase from Saccharolobus solfataricus (strain ATCC 35092 / DSM 1617 / JCM 11322 / P2) (Sulfolobus solfataricus).